Reading from the N-terminus, the 456-residue chain is Putative alanyl-tRNA editing protein alaX (456 aa).

Positions 125, 129, 240, and 244 each coordinate Zn(2+).

Belongs to the class-II aminoacyl-tRNA synthetase family. Alax-L subfamily. It depends on Zn(2+) as a cofactor.

Its function is as follows. May function in trans to edit the amino acid moiety from incorrectly charged tRNA(Ala). This Saccharomyces cerevisiae (strain ATCC 204508 / S288c) (Baker's yeast) protein is Putative alanyl-tRNA editing protein alaX.